Here is a 499-residue protein sequence, read N- to C-terminus: 3-beta-hydroxylase (499 aa).

Residues 2 to 22 traverse the membrane as a helical; Signal-anchor for type II membrane protein segment; the sequence is FSSFETLILSFVSLFFMMIFI. Cys-441 is a binding site for heme.

The protein belongs to the cytochrome P450 family. It depends on heme as a cofactor.

The protein localises to the membrane. It carries out the reaction (+)-costunolide + reduced [NADPH--hemoprotein reductase] + O2 = 3beta-hydroxycostunolide + oxidized [NADPH--hemoprotein reductase] + H2O + H(+). The enzyme catalyses parthenolide + reduced [NADPH--hemoprotein reductase] + O2 = 3beta-hydroxyparthenolide + oxidized [NADPH--hemoprotein reductase] + H2O + H(+). Its pathway is secondary metabolite biosynthesis; terpenoid biosynthesis. In terms of biological role, involved in the biosynthesis of germacrene-derived sesquiterpene lactones. Component of the parthenolide biosynthetic pathway; parthenolide and conjugates are promising anti-cancer drugs highly active against colon cancer cells. Catalyzes the conversion of costunolide and parthenolide to 3-beta-hydroxycostunolide and 3-beta-hydroxyparthenolide, respectively. This Tanacetum parthenium (Feverfew) protein is 3-beta-hydroxylase.